The following is a 221-amino-acid chain: Guanylate kinase (221 aa).

Residues 20-199 form the Guanylate kinase-like domain; that stretch reads GLMFILSSPS…CFGKVREILA (180 aa). An ATP-binding site is contributed by 27–34; it reads SPSGAGKT.

This sequence belongs to the guanylate kinase family.

It is found in the cytoplasm. It catalyses the reaction GMP + ATP = GDP + ADP. In terms of biological role, essential for recycling GMP and indirectly, cGMP. The chain is Guanylate kinase from Novosphingobium aromaticivorans (strain ATCC 700278 / DSM 12444 / CCUG 56034 / CIP 105152 / NBRC 16084 / F199).